The chain runs to 280 residues: Ribosomal protein L11 methyltransferase (280 aa).

Positions 131, 152, 174, and 217 each coordinate S-adenosyl-L-methionine.

Belongs to the methyltransferase superfamily. PrmA family.

The protein localises to the cytoplasm. The catalysed reaction is L-lysyl-[protein] + 3 S-adenosyl-L-methionine = N(6),N(6),N(6)-trimethyl-L-lysyl-[protein] + 3 S-adenosyl-L-homocysteine + 3 H(+). Its function is as follows. Methylates ribosomal protein L11. The protein is Ribosomal protein L11 methyltransferase of Bacteroides fragilis (strain ATCC 25285 / DSM 2151 / CCUG 4856 / JCM 11019 / LMG 10263 / NCTC 9343 / Onslow / VPI 2553 / EN-2).